The chain runs to 215 residues: Ion-translocating oxidoreductase complex subunit G (215 aa).

Residues 9–29 (GLILSLFAIITSGLIALTYFG) form a helical membrane-spanning segment. Position 176 is an FMN phosphoryl threonine (T176).

Belongs to the RnfG family. As to quaternary structure, the complex is composed of six subunits: RnfA, RnfB, RnfC, RnfD, RnfE and RnfG. FMN is required as a cofactor.

It is found in the cell inner membrane. In terms of biological role, part of a membrane-bound complex that couples electron transfer with translocation of ions across the membrane. This is Ion-translocating oxidoreductase complex subunit G from Pseudoalteromonas atlantica (strain T6c / ATCC BAA-1087).